The primary structure comprises 1071 residues: ATP-dependent helicase/deoxyribonuclease subunit B (1071 aa).

The protein belongs to the helicase family. AddB/RexB type 2 subfamily. Heterodimer of AddA and RexB. Mg(2+) serves as cofactor.

The heterodimer acts as both an ATP-dependent DNA helicase and an ATP-dependent, dual-direction single-stranded exonuclease. Recognizes the chi site generating a DNA molecule suitable for the initiation of homologous recombination. This subunit has 5' -&gt; 3' nuclease activity but not helicase activity. The chain is ATP-dependent helicase/deoxyribonuclease subunit B from Streptococcus pyogenes serotype M18 (strain MGAS8232).